Consider the following 548-residue polypeptide: Uridine-cytidine kinase-like 1 (548 aa).

Residues 1–18 (MAAPPASMSAAPSPLQSA) show a composition bias toward low complexity. The disordered stretch occupies residues 1–74 (MAAPPASMSA…CKSEPPLLRT (74 aa)). Phosphoserine is present on residues S56 and S63. 105–112 (GGSASGKT) provides a ligand contact to ATP. S539 is modified (phosphoserine).

This sequence belongs to the uridine kinase family. As to quaternary structure, interacts with RNF19B. Ubiquitinated by RNF19B; which induces proteasomal degradation.

It localises to the cytoplasm. Its subcellular location is the nucleus. The catalysed reaction is uridine + ATP = UMP + ADP + H(+). It catalyses the reaction cytidine + ATP = CMP + ADP + H(+). Its pathway is pyrimidine metabolism; UMP biosynthesis via salvage pathway; UMP from uridine: step 1/1. May contribute to UTP accumulation needed for blast transformation and proliferation. This is Uridine-cytidine kinase-like 1 (Uckl1) from Mus musculus (Mouse).